The primary structure comprises 227 residues: Transcription elongation factor A protein-like 2 (227 aa).

Disordered stretches follow at residues 1–145 (MEKL…TNKG) and 202–227 (FYPR…IPYV). Composition is skewed to basic and acidic residues over residues 18–43 (IDNE…KLEN), 50–82 (TGKR…KGKS), 90–113 (TEGK…REPE), 120–136 (SETR…DIPR), and 206–227 (GPRE…IPYV).

The protein belongs to the TFS-II family. TFA subfamily.

It localises to the nucleus. Functionally, may be involved in transcriptional regulation. The protein is Transcription elongation factor A protein-like 2 (TCEAL2) of Homo sapiens (Human).